A 579-amino-acid polypeptide reads, in one-letter code: Probable cholinesterase (579 aa).

The N-terminal stretch at 1 to 19 (MTDHKIIMLLLLGIYCIQA) is a signal peptide. N-linked (GlcNAc...) asparagine; by host glycans are attached at residues N77 and N144. The Acyl-ester intermediate role is filled by S217. N257, N269, and N283 each carry an N-linked (GlcNAc...) asparagine; by host glycan. E337 functions as the Charge relay system in the catalytic mechanism. 2 N-linked (GlcNAc...) asparagine; by host glycosylation sites follow: N373 and N394. The active-site Charge relay system is H451. Residue N469 is glycosylated (N-linked (GlcNAc...) asparagine; by host).

Belongs to the type-B carboxylesterase/lipase family.

The catalysed reaction is an acylcholine + H2O = a carboxylate + choline + H(+). In terms of biological role, may be involved in the disruption of the host membrane. The chain is Probable cholinesterase from Acanthamoeba polyphaga mimivirus (APMV).